The chain runs to 791 residues: Nuclear cap-binding protein subunit 1-B (791 aa).

The interval Met-1 to Pro-24 is disordered. Positions Glu-28–Lys-240 constitute an MIF4G domain. A coiled-coil region spans residues Leu-641 to Ile-714. The disordered stretch occupies residues Gln-664 to Gly-687.

Belongs to the NCBP1 family. In terms of assembly, component of the nuclear cap-binding complex (CBC), a heterodimer composed of ncbp1/cbp80 and ncbp2/cbp20 that interacts with m7GpppG-capped RNA. Component of an alternative nuclear cap-binding complex (CBC) composed of ncbp1/cbp80 and ncbp3.

Its subcellular location is the nucleus. It is found in the cytoplasm. In terms of biological role, component of the cap-binding complex (CBC), which binds cotranscriptionally to the 5'-cap of pre-mRNAs and is involved in various processes such as pre-mRNA splicing, translation regulation, nonsense-mediated mRNA decay, RNA-mediated gene silencing (RNAi) by microRNAs (miRNAs) and mRNA export. The CBC complex is involved in mRNA export from the nucleus, leading to the recruitment of the mRNA export machinery to the 5'-end of mRNA and to mRNA export in a 5' to 3' direction through the nuclear pore. The CBC complex is also involved in mediating U snRNA and intronless mRNAs export from the nucleus. The CBC complex is essential for a pioneer round of mRNA translation, before steady state translation when the CBC complex is replaced by cytoplasmic cap-binding protein eIF4E. The pioneer round of mRNA translation mediated by the CBC complex plays a central role in nonsense-mediated mRNA decay (NMD), NMD only taking place in mRNAs bound to the CBC complex, but not on eIF4E-bound mRNAs. The CBC complex enhances NMD in mRNAs containing at least one exon-junction complex (EJC), promoting the interaction between UPF1 and UPF2. The CBC complex is also involved in 'failsafe' NMD, which is independent of the EJC complex, while it does not participate in Staufen-mediated mRNA decay (SMD). During cell proliferation, the CBC complex is also involved in microRNAs (miRNAs) biogenesis via its interaction with SRRT/ARS2 and is required for miRNA-mediated RNA interference. The CBC complex also acts as a negative regulator of parn, thereby acting as an inhibitor of mRNA deadenylation. In the CBC complex, NCBP1/CBP80 does not bind directly capped RNAs (m7GpppG-capped RNA) but is required to stabilize the movement of the N-terminal loop of NCBP2/CBP20 and lock the CBC into a high affinity cap-binding state with the cap structure. Associates with NCBP3 to form an alternative cap-binding complex (CBC) which plays a key role in mRNA export. The conventional CBC with NCBP2 binds both small nuclear RNA (snRNA) and messenger (mRNA) and is involved in their export from the nucleus whereas the alternative CBC with NCBP3 does not bind snRNA and associates only with mRNA thereby playing a role only in mRNA export. This Xenopus laevis (African clawed frog) protein is Nuclear cap-binding protein subunit 1-B (ncbp1-b).